Consider the following 231-residue polypeptide: 2-C-methyl-D-erythritol 4-phosphate cytidylyltransferase (231 aa).

It belongs to the IspD/TarI cytidylyltransferase family. IspD subfamily. Homodimer.

The enzyme catalyses 2-C-methyl-D-erythritol 4-phosphate + CTP + H(+) = 4-CDP-2-C-methyl-D-erythritol + diphosphate. Its pathway is isoprenoid biosynthesis; isopentenyl diphosphate biosynthesis via DXP pathway; isopentenyl diphosphate from 1-deoxy-D-xylulose 5-phosphate: step 2/6. Functionally, catalyzes the formation of 4-diphosphocytidyl-2-C-methyl-D-erythritol from CTP and 2-C-methyl-D-erythritol 4-phosphate (MEP). The chain is 2-C-methyl-D-erythritol 4-phosphate cytidylyltransferase from Citrobacter koseri (strain ATCC BAA-895 / CDC 4225-83 / SGSC4696).